The chain runs to 356 residues: Protein RecA (356 aa).

ATP is bound at residue Gly-68–Thr-75.

This sequence belongs to the RecA family.

It localises to the cytoplasm. In terms of biological role, can catalyze the hydrolysis of ATP in the presence of single-stranded DNA, the ATP-dependent uptake of single-stranded DNA by duplex DNA, and the ATP-dependent hybridization of homologous single-stranded DNAs. It interacts with LexA causing its activation and leading to its autocatalytic cleavage. This chain is Protein RecA, found in Clostridium botulinum (strain Eklund 17B / Type B).